A 200-amino-acid chain; its full sequence is Probable GTP-binding protein EngB (200 aa).

An EngB-type G domain is found at 22 to 199; sequence GLDEIALAGR…KDWIQARLYE (178 aa). Residues 30-37, 57-61, 78-81, 145-148, and 178-180 contribute to the GTP site; these read GRSNVGKS, GKTQT, DVPG, TKMD, and FSS. The Mg(2+) site is built by Ser37 and Thr59.

Belongs to the TRAFAC class TrmE-Era-EngA-EngB-Septin-like GTPase superfamily. EngB GTPase family. Requires Mg(2+) as cofactor.

Functionally, necessary for normal cell division and for the maintenance of normal septation. The chain is Probable GTP-binding protein EngB from Lactobacillus delbrueckii subsp. bulgaricus (strain ATCC 11842 / DSM 20081 / BCRC 10696 / JCM 1002 / NBRC 13953 / NCIMB 11778 / NCTC 12712 / WDCM 00102 / Lb 14).